A 2304-amino-acid polypeptide reads, in one-letter code: Protein Ycf2 (2304 aa).

Position 1637–1644 (1637–1644 (GSIGTGRS)) interacts with ATP.

This sequence belongs to the Ycf2 family.

Its subcellular location is the plastid. It localises to the chloroplast stroma. Functionally, probable ATPase of unknown function. Its presence in a non-photosynthetic plant (Epifagus virginiana) and experiments in tobacco indicate that it has an essential function which is probably not related to photosynthesis. The chain is Protein Ycf2 from Amborella trichopoda.